Here is a 315-residue protein sequence, read N- to C-terminus: N-acetylneuraminate lyase (315 aa).

Serine 59 and serine 60 together coordinate aceneuramate. Tyrosine 149 (proton donor) is an active-site residue. Lysine 177 functions as the Schiff-base intermediate with substrate in the catalytic mechanism. Residues serine 179, glycine 202, aspartate 204, glutamate 205, and glycine 221 each coordinate aceneuramate.

This sequence belongs to the DapA family. NanA subfamily. As to quaternary structure, homotetramer.

It localises to the cytoplasm. It catalyses the reaction aceneuramate = aldehydo-N-acetyl-D-mannosamine + pyruvate. Its pathway is amino-sugar metabolism; N-acetylneuraminate degradation; D-fructose 6-phosphate from N-acetylneuraminate: step 1/5. In terms of biological role, catalyzes the reversible aldol cleavage of N-acetylneuraminic acid (sialic acid; Neu5Ac) to form pyruvate and N-acetylmannosamine (ManNAc) via a Schiff base intermediate. Cannot use 2,7-anhydro-Neu5Ac. Involved in the degradation of sialic acid, which is present in the host mucus layer and represents a much-coveted source of nutrients for R.gnavus, a prevalent member of the normal gut microbiota. The sequence is that of N-acetylneuraminate lyase from Mediterraneibacter gnavus (strain ATCC 29149 / DSM 114966 / JCM 6515 / VPI C7-9) (Ruminococcus gnavus).